The sequence spans 317 residues: Pinoresinol reductase 2 (317 aa).

NADP(+) is bound by residues Thr-18, Ser-20, Leu-21, Arg-41, Lys-50, Ser-90, Gly-91, Arg-95, Asn-98, and Ser-121. Met-125 contributes to the (-)-pinoresinol binding site. Residues Lys-144 and Phe-166 each contribute to the NADP(+) site. The active-site Proton acceptor is the Lys-144. Gly-178 contributes to the (-)-pinoresinol binding site.

It belongs to the NmrA-type oxidoreductase family. Isoflavone reductase subfamily. As to quaternary structure, forms homodimers. As to expression, expressed in roots. Detected in stems.

The enzyme catalyses (-)-lariciresinol + NADP(+) = (-)-pinoresinol + NADPH + H(+). Reductase involved in lignan biosynthesis. Unlike conventional pinoresinol reductases that can reduce both pinoresinol and lariciresinol, PRR2 shows a strict substrate selectivity for (-)-pinoresinol. No activity with (+)-pinoresinol or lariciresinol. Abstracts the 4R-hydride from the NADPH cofactor during catalysis. This chain is Pinoresinol reductase 2, found in Arabidopsis thaliana (Mouse-ear cress).